Consider the following 97-residue polypeptide: Cobalt transport protein CbiN (97 aa).

2 helical membrane passes run 6–26 (VLMI…YSGL) and 68–88 (SLLF…FFGY).

It belongs to the CbiN family. In terms of assembly, forms an energy-coupling factor (ECF) transporter complex composed of an ATP-binding protein (A component, CbiO), a transmembrane protein (T component, CbiQ) and 2 possible substrate-capture proteins (S components, CbiM and CbiN) of unknown stoichimetry.

The protein resides in the cell membrane. The protein operates within cofactor biosynthesis; adenosylcobalamin biosynthesis. In terms of biological role, part of the energy-coupling factor (ECF) transporter complex CbiMNOQ involved in cobalt import. The protein is Cobalt transport protein CbiN of Methanococcus maripaludis (strain C5 / ATCC BAA-1333).